A 164-amino-acid polypeptide reads, in one-letter code: Large ribosomal subunit protein uL10 (164 aa).

It belongs to the universal ribosomal protein uL10 family. Part of the ribosomal stalk of the 50S ribosomal subunit. The N-terminus interacts with L11 and the large rRNA to form the base of the stalk. The C-terminus forms an elongated spine to which L12 dimers bind in a sequential fashion forming a multimeric L10(L12)X complex.

Functionally, forms part of the ribosomal stalk, playing a central role in the interaction of the ribosome with GTP-bound translation factors. This chain is Large ribosomal subunit protein uL10 (rplJ), found in Helicobacter pylori (strain ATCC 700392 / 26695) (Campylobacter pylori).